Consider the following 129-residue polypeptide: MARKTNTRKKRVKKNIEAGVAHIRSTFNNTIVTLTDTHGNALSWSSAGALGFRGSRKSTPFAAQMAAETAAKAAMEHGLKTLEVTVKGPGAGREAAIRALQAAGLEVTAIRDVTPVPHNGCRPPKRRRV.

It belongs to the universal ribosomal protein uS11 family. In terms of assembly, part of the 30S ribosomal subunit. Interacts with proteins S7 and S18. Binds to IF-3.

In terms of biological role, located on the platform of the 30S subunit, it bridges several disparate RNA helices of the 16S rRNA. Forms part of the Shine-Dalgarno cleft in the 70S ribosome. This Bacillus anthracis (strain A0248) protein is Small ribosomal subunit protein uS11.